A 334-amino-acid polypeptide reads, in one-letter code: Holliday junction branch migration complex subunit RuvB (334 aa).

The large ATPase domain (RuvB-L) stretch occupies residues 4-184 (ADRIISASPK…FGIVQRLEFY (181 aa)). ATP-binding positions include Ile23, Arg24, Gly65, Lys68, Thr69, Thr70, 131–133 (EDY), Arg174, Tyr184, and Arg221. A Mg(2+)-binding site is contributed by Thr69. A small ATPAse domain (RuvB-S) region spans residues 185 to 255 (SVDDLTSIVK…IAKQALAMLD (71 aa)). The segment at 258 to 334 (SEGFDFMDIK…YAHLGIAKLD (77 aa)) is head domain (RuvB-H). The DNA site is built by Arg294, Arg313, and Arg318.

Belongs to the RuvB family. In terms of assembly, homohexamer. Forms an RuvA(8)-RuvB(12)-Holliday junction (HJ) complex. HJ DNA is sandwiched between 2 RuvA tetramers; dsDNA enters through RuvA and exits via RuvB. An RuvB hexamer assembles on each DNA strand where it exits the tetramer. Each RuvB hexamer is contacted by two RuvA subunits (via domain III) on 2 adjacent RuvB subunits; this complex drives branch migration. In the full resolvosome a probable DNA-RuvA(4)-RuvB(12)-RuvC(2) complex forms which resolves the HJ.

The protein localises to the cytoplasm. The catalysed reaction is ATP + H2O = ADP + phosphate + H(+). Its function is as follows. The RuvA-RuvB-RuvC complex processes Holliday junction (HJ) DNA during genetic recombination and DNA repair, while the RuvA-RuvB complex plays an important role in the rescue of blocked DNA replication forks via replication fork reversal (RFR). RuvA specifically binds to HJ cruciform DNA, conferring on it an open structure. The RuvB hexamer acts as an ATP-dependent pump, pulling dsDNA into and through the RuvAB complex. RuvB forms 2 homohexamers on either side of HJ DNA bound by 1 or 2 RuvA tetramers; 4 subunits per hexamer contact DNA at a time. Coordinated motions by a converter formed by DNA-disengaged RuvB subunits stimulates ATP hydrolysis and nucleotide exchange. Immobilization of the converter enables RuvB to convert the ATP-contained energy into a lever motion, pulling 2 nucleotides of DNA out of the RuvA tetramer per ATP hydrolyzed, thus driving DNA branch migration. The RuvB motors rotate together with the DNA substrate, which together with the progressing nucleotide cycle form the mechanistic basis for DNA recombination by continuous HJ branch migration. Branch migration allows RuvC to scan DNA until it finds its consensus sequence, where it cleaves and resolves cruciform DNA. This chain is Holliday junction branch migration complex subunit RuvB, found in Actinobacillus pleuropneumoniae serotype 5b (strain L20).